The sequence spans 292 residues: D-alanyl-D-alanine endopeptidase (292 aa).

The first 18 residues, 1–18 (MFKKALFILSLCPSFALA), serve as a signal peptide directing secretion. The active-site Acyl-ester intermediate is the S45. Residue K48 is the Proton acceptor of the active site. Residue S102 is part of the active site. Residue K207 coordinates substrate.

It belongs to the peptidase S11 family.

It localises to the periplasm. Its function is as follows. Cell wall formation. May play a specialized role in remodeling the cell wall. Specifically hydrolyzes the DD-diaminopimelate-alanine bonds in high-molecular-mass murein sacculi. In Haemophilus influenzae (strain ATCC 51907 / DSM 11121 / KW20 / Rd), this protein is D-alanyl-D-alanine endopeptidase (pbpG).